A 1078-amino-acid polypeptide reads, in one-letter code: Isoleucine--tRNA ligase (1078 aa).

The short motif at 52-62 is the 'HIGH' region element; sequence PTANGKPALHH. A 'KMSKS' region motif is present at residues 637–641; that stretch reads KMSKS. Position 640 (K640) interacts with ATP.

This sequence belongs to the class-I aminoacyl-tRNA synthetase family. IleS type 2 subfamily. As to quaternary structure, monomer. The cofactor is Zn(2+).

Its subcellular location is the cytoplasm. It carries out the reaction tRNA(Ile) + L-isoleucine + ATP = L-isoleucyl-tRNA(Ile) + AMP + diphosphate. Catalyzes the attachment of isoleucine to tRNA(Ile). As IleRS can inadvertently accommodate and process structurally similar amino acids such as valine, to avoid such errors it has two additional distinct tRNA(Ile)-dependent editing activities. One activity is designated as 'pretransfer' editing and involves the hydrolysis of activated Val-AMP. The other activity is designated 'posttransfer' editing and involves deacylation of mischarged Val-tRNA(Ile). The chain is Isoleucine--tRNA ligase from Deinococcus radiodurans (strain ATCC 13939 / DSM 20539 / JCM 16871 / CCUG 27074 / LMG 4051 / NBRC 15346 / NCIMB 9279 / VKM B-1422 / R1).